The sequence spans 739 residues: NAD(P)H-quinone oxidoreductase subunit 5, chloroplastic (739 aa).

16 helical membrane-spanning segments follow: residues 9-29, 40-60, 89-109, 125-145, 147-167, 184-204, 224-244, 258-278, 289-311, 318-338, 354-374, 396-416, 427-447, 546-566, 605-625, and 718-738; these read WIIPFIPLPIPILIGVGLLLF, WSFQSVLLLTIVMIFSINLSI, IDPLTSIMSILITTVGIMVLI, FAYMGFFSTSMLGLVTSSNLI, IYIFWELVGMCSYLLIGFWFT, IGDFGLLLGILGFYWITGSFE, LFVTLCAGLVFAGAVAKSAQF, TPISALIHAATMVAAGIFLVA, YIMNFISLIGIITVLLGATLALA, GLAFSTMSQLGYMMLALGMGS, ALLFLGSGSVIHSMETIVGYS, NTFLLGTLSLCGIPPLACFWS, YSTIFAIIAWATAGLTAFYIF, LFPLLILGLFTLFVGSIGIPF, VSSVSIAYLGIFIASLLYKPP, and ISSYLFFYLTYVSIFLLVFFI.

The protein belongs to the complex I subunit 5 family. In terms of assembly, NDH is composed of at least 16 different subunits, 5 of which are encoded in the nucleus.

Its subcellular location is the plastid. The protein localises to the chloroplast thylakoid membrane. It carries out the reaction a plastoquinone + NADH + (n+1) H(+)(in) = a plastoquinol + NAD(+) + n H(+)(out). It catalyses the reaction a plastoquinone + NADPH + (n+1) H(+)(in) = a plastoquinol + NADP(+) + n H(+)(out). Functionally, NDH shuttles electrons from NAD(P)H:plastoquinone, via FMN and iron-sulfur (Fe-S) centers, to quinones in the photosynthetic chain and possibly in a chloroplast respiratory chain. The immediate electron acceptor for the enzyme in this species is believed to be plastoquinone. Couples the redox reaction to proton translocation, and thus conserves the redox energy in a proton gradient. The chain is NAD(P)H-quinone oxidoreductase subunit 5, chloroplastic (ndhF) from Coffea arabica (Arabian coffee).